The chain runs to 725 residues: 1,4-alpha-glucan branching enzyme GlgB (725 aa).

D406 serves as the catalytic Nucleophile. E459 acts as the Proton donor in catalysis.

This sequence belongs to the glycosyl hydrolase 13 family. GlgB subfamily. As to quaternary structure, monomer.

It carries out the reaction Transfers a segment of a (1-&gt;4)-alpha-D-glucan chain to a primary hydroxy group in a similar glucan chain.. It participates in glycan biosynthesis; glycogen biosynthesis. Catalyzes the formation of the alpha-1,6-glucosidic linkages in glycogen by scission of a 1,4-alpha-linked oligosaccharide from growing alpha-1,4-glucan chains and the subsequent attachment of the oligosaccharide to the alpha-1,6 position. This Methylobacillus flagellatus (strain ATCC 51484 / DSM 6875 / VKM B-1610 / KT) protein is 1,4-alpha-glucan branching enzyme GlgB.